The primary structure comprises 427 residues: Hydroxylamine reductase (427 aa).

[4Fe-4S] cluster-binding residues include Cys-3, Cys-6, Cys-15, and Cys-21. Positions 129, 153, 197, 283, 311, 336, 370, and 372 each coordinate hybrid [4Fe-2O-2S] cluster. Cys-283 bears the Cysteine persulfide mark.

The protein belongs to the HCP family. The cofactor is [4Fe-4S] cluster. Requires hybrid [4Fe-2O-2S] cluster as cofactor.

Its subcellular location is the cytoplasm. It carries out the reaction A + NH4(+) + H2O = hydroxylamine + AH2 + H(+). Catalyzes the reduction of hydroxylamine to form NH(3) and H(2)O. This is Hydroxylamine reductase from Moorella thermoacetica (strain ATCC 39073 / JCM 9320).